A 360-amino-acid polypeptide reads, in one-letter code: DNA replication and repair protein RecF (360 aa).

33-40 (GENGSGKT) is an ATP binding site.

The protein belongs to the RecF family.

The protein resides in the cytoplasm. Its function is as follows. The RecF protein is involved in DNA metabolism; it is required for DNA replication and normal SOS inducibility. RecF binds preferentially to single-stranded, linear DNA. It also seems to bind ATP. This chain is DNA replication and repair protein RecF, found in Rickettsia rickettsii (strain Iowa).